A 257-amino-acid chain; its full sequence is Ribonuclease HII (257 aa).

An RNase H type-2 domain is found at 71-257 (SLIAGIDEVG…TSFEPIKSML (187 aa)). Residues aspartate 77, glutamate 78, and aspartate 172 each coordinate a divalent metal cation.

The protein belongs to the RNase HII family. Mn(2+) is required as a cofactor. It depends on Mg(2+) as a cofactor.

The protein localises to the cytoplasm. The enzyme catalyses Endonucleolytic cleavage to 5'-phosphomonoester.. Functionally, endonuclease that specifically degrades the RNA of RNA-DNA hybrids. The sequence is that of Ribonuclease HII from Streptococcus uberis (strain ATCC BAA-854 / 0140J).